Reading from the N-terminus, the 126-residue chain is Large ribosomal subunit protein bL12 (126 aa).

The protein belongs to the bacterial ribosomal protein bL12 family. As to quaternary structure, homodimer. Part of the ribosomal stalk of the 50S ribosomal subunit. Forms a multimeric L10(L12)X complex, where L10 forms an elongated spine to which 2 to 4 L12 dimers bind in a sequential fashion. Binds GTP-bound translation factors.

Forms part of the ribosomal stalk which helps the ribosome interact with GTP-bound translation factors. Is thus essential for accurate translation. The sequence is that of Large ribosomal subunit protein bL12 from Prosthecochloris aestuarii (strain DSM 271 / SK 413).